The primary structure comprises 1331 residues: Sodium-dependent transporter bedraggled (1331 aa).

Residues 1 to 62 (MSSKEQQAAG…QLEHEQFGLS (62 aa)) are disordered. Over residues 16–25 (NSNAYSSLPP) the composition is skewed to polar residues. The span at 28-43 (TGAGCSGAALGSGTGT) shows a compositional bias: gly residues. The N-linked (GlcNAc...) asparagine glycan is linked to N168. Disordered stretches follow at residues 221–284 (EPRT…TEPV) and 363–473 (QTNA…SASS). Residues 258 to 282 (KTFSCSLRPTSQIASSSGSLETSTE) show a composition bias toward polar residues. Residues 369–383 (SSEEPRPRQYGRRLE) are compositionally biased toward basic and acidic residues. Polar residues predominate over residues 413 to 436 (LQDTPTHPIMSTCSELSSARSSRM). Over residues 437 to 453 (PSPVSLPSDSSSSGSSS) the composition is skewed to low complexity. Residues 463-473 (VQTTTMCSASS) show a composition bias toward polar residues. 3 helical membrane passes run 505 to 525 (LALIGCTLGVFNMCRFAVLTI), 531 to 551 (FLLQFLLLSVIFGIPLLWLQM), and 567 to 587 (ISPICAGVGIALVMQQCFLAL). 2 N-linked (GlcNAc...) asparagine glycosylation sites follow: N627 and N631. 4 helical membrane passes run 667–687 (QLAFYLALIWAAVFLILCKGL), 696–716 (IIYTLPLVALAVVTAKFVYVV), 741–761 (TAATQETFLTWGLLGASVIAI), and 778–798 (AILLVLFTLIGLGLMALLALC). Residue N857 is glycosylated (N-linked (GlcNAc...) asparagine). The helical transmembrane segment at 890-910 (WVWAAVAFATFAGFGLAQLCV) threads the bilayer. An N-linked (GlcNAc...) asparagine glycan is attached at N921. 4 helical membrane passes run 926 to 946 (VLLSCVTGLLLSIPFATEMGI), 956 to 976 (LGGSWFIPIIWTAQIFGVFLI), 998 to 1018 (AFLALSWNVLLPIGLITLSVV), and 1044 to 1064 (MGSLIQIGVLLVIPVTAIIQI). Disordered stretches follow at residues 1086-1136 (PEEG…SYTT), 1169-1238 (SLDA…ASTL), and 1256-1275 (VRHRQSQGGGNLVTASTLPR). Composition is skewed to polar residues over residues 1097-1115 (ARQTASQSRRNALGQTTEG) and 1186-1196 (ILTNPAGSSFN). Positions 1197–1209 (ADPSPASSSSPES) are enriched in low complexity.

The protein belongs to the sodium:neurotransmitter symporter (SNF) (TC 2.A.22) family.

The protein localises to the membrane. Putative sodium-dependent transporter which is required for viability, early imaginal disk development and adult motor coordination. Also has a role in the fate commitment of the R3/R4 photoreceptor cells. May function in ommatidial polarity by regulating the activity of the core polarity genes, acting upstream of (or in parallel to) Vang, dsh, pk, stan, and dgo, but downstream or independently of fz. The chain is Sodium-dependent transporter bedraggled from Drosophila melanogaster (Fruit fly).